The sequence spans 686 residues: Translation initiation factor IF-2 (686 aa).

The segment at 53–105 (EKPSVADEFEVEEKVVRSKKNSNKKKKKGKGNEDKRQENFAGRQQTQTVETPD) is disordered. Residues 69–81 (RSKKNSNKKKKKG) show a composition bias toward basic residues. A tr-type G domain is found at 188–357 (ERPAVVTIMG…LLVSEVEEYK (170 aa)). Positions 197–204 (GHVDHGKT) are G1. Residue 197–204 (GHVDHGKT) participates in GTP binding. A G2 region spans residues 222–226 (GITQH). The tract at residues 243–246 (DTPG) is G3. GTP contacts are provided by residues 243-247 (DTPGH) and 297-300 (NKMD). A G4 region spans residues 297–300 (NKMD). The G5 stretch occupies residues 333-335 (SAI).

Belongs to the TRAFAC class translation factor GTPase superfamily. Classic translation factor GTPase family. IF-2 subfamily.

It localises to the cytoplasm. One of the essential components for the initiation of protein synthesis. Protects formylmethionyl-tRNA from spontaneous hydrolysis and promotes its binding to the 30S ribosomal subunits. Also involved in the hydrolysis of GTP during the formation of the 70S ribosomal complex. This Bacillus cereus (strain ATCC 10987 / NRS 248) protein is Translation initiation factor IF-2.